The sequence spans 798 residues: Elongation factor G, mitochondrial (798 aa).

A mitochondrion-targeting transit peptide spans 1–24 (MRVIRAAAALNSSCAASSRQGARY). A tr-type G domain is found at 97-383 (SMVRNIGIAA…AVCDYLPNPG (287 aa)). Residues 106-113 (AHIDSGKT), 181-185 (DTPGH), and 235-238 (NKMD) contribute to the GTP site.

It belongs to the TRAFAC class translation factor GTPase superfamily. Classic translation factor GTPase family. EF-G/EF-2 subfamily.

The protein localises to the mitochondrion. The protein operates within protein biosynthesis; polypeptide chain elongation. Its function is as follows. Mitochondrial GTPase that catalyzes the GTP-dependent ribosomal translocation step during translation elongation. During this step, the ribosome changes from the pre-translocational (PRE) to the post-translocational (POST) state as the newly formed A-site-bound peptidyl-tRNA and P-site-bound deacylated tRNA move to the P and E sites, respectively. Catalyzes the coordinated movement of the two tRNA molecules, the mRNA and conformational changes in the ribosome. The chain is Elongation factor G, mitochondrial from Chaetomium globosum (strain ATCC 6205 / CBS 148.51 / DSM 1962 / NBRC 6347 / NRRL 1970) (Soil fungus).